The sequence spans 307 residues: Ribonuclease Z (307 aa).

Zn(2+)-binding residues include H63, H65, D67, H68, H141, D212, and H270. The active-site Proton acceptor is D67.

This sequence belongs to the RNase Z family. As to quaternary structure, homodimer. The cofactor is Zn(2+).

The enzyme catalyses Endonucleolytic cleavage of RNA, removing extra 3' nucleotides from tRNA precursor, generating 3' termini of tRNAs. A 3'-hydroxy group is left at the tRNA terminus and a 5'-phosphoryl group is left at the trailer molecule.. Its function is as follows. Zinc phosphodiesterase, which displays some tRNA 3'-processing endonuclease activity. Probably involved in tRNA maturation, by removing a 3'-trailer from precursor tRNA. The protein is Ribonuclease Z of Bacillus cereus (strain ZK / E33L).